Here is a 78-residue protein sequence, read N- to C-terminus: Large ribosomal subunit protein bL28 (78 aa).

Residues 1 to 25 (MSRVCQVTGKRPAVGNNRSHARNAT) are disordered.

This sequence belongs to the bacterial ribosomal protein bL28 family.

The sequence is that of Large ribosomal subunit protein bL28 from Vibrio vulnificus (strain CMCP6).